Consider the following 102-residue polypeptide: Large ribosomal subunit protein bL21 (102 aa).

This sequence belongs to the bacterial ribosomal protein bL21 family. In terms of assembly, part of the 50S ribosomal subunit. Contacts protein L20.

In terms of biological role, this protein binds to 23S rRNA in the presence of protein L20. This Oceanobacillus iheyensis (strain DSM 14371 / CIP 107618 / JCM 11309 / KCTC 3954 / HTE831) protein is Large ribosomal subunit protein bL21.